The following is a 611-amino-acid chain: MPEIVDTCSLASPASVCRTKHLHLRCSVDFTRRTLTGTAALTVQSQEDNLRSLVLDTKDLTIEKVVINGQEVKYALGERQSYKGSPMEISLPIALSKNQEIVIEISFETSPKSSALQWLTPEQTSGKEHPYLFSQCQAIHCRAILPCQDTPSVKLTYTAEVSVPKELVALMSAIRDGETPDPEDPSRKIYKFIQKVPIPCYLIALVVGALESRQIGPRTLVWSEKEQVEKSAYEFSETESMLKIAEDLGGPYVWGQYDLLVLPPSFPYGGMENPCLTFVTPTLLAGDKSLSNVIAHEISHSWTGNLVTNKTWDHFWLNEGHTVYLERHICGRLFGEKFRHFNALGGWGELQNSVKTFGETHPFTKLVVDLTDIDPDVAYSSVPYEKGFALLFYLEQLLGGPEIFLGFLKAYVEKFSYKSITTDDWKDFLYSYFKDKVDVLNQVDWNAWLYSPGLPPIKPNYDMTLTNACIALSQRWITAKEDDLNSFNATDLKDLSSHQLNEFLAQTLQRAPLPLGHIKRMQEVYNFNAINNSEIRFRWLRLCIQSKWEDAIPLALKMATEQGRMKFTRPLFKDLAAFDKSHDQAVRTYQEHKASMHPVTAMLVGKDLKVD.

The residue at position 73 (lysine 73) is an N6-acetyllysine. Residues 135-137 and 267-272 contribute to the a peptide site; these read QCQ and PYGGME. Histidine 296 lines the Zn(2+) pocket. The active-site Proton acceptor is the glutamate 297. 2 residues coordinate Zn(2+): histidine 300 and glutamate 319. N6-acetyllysine is present on lysine 337. The Proton donor role is filled by tyrosine 384. Lysine 414 carries the N6-acetyllysine modification. Serine 416 is modified (phosphoserine). An a peptide-binding site is contributed by 564-566; the sequence is RMK. Lysine 573 is modified (N6-acetyllysine).

The protein belongs to the peptidase M1 family. Monomer. Zn(2+) is required as a cofactor. In terms of processing, phosphorylation at Ser-416 inhibits leukotriene-A4 hydrolase activity. Isoform 1 and isoform 2 are expressed in monocytes, lymphocytes, neutrophils, reticulocytes, platelets and fibroblasts.

The protein resides in the cytoplasm. It catalyses the reaction leukotriene A4 + H2O = leukotriene B4. The enzyme catalyses (5S,6S)-epoxy-(18R)-hydroxy-(7E,9E,11Z,14Z,16E)-eicosapentaenoate + H2O = resolvin E1. It carries out the reaction (5S,6S)-epoxy-(18S)-hydroxy-(7E,9E,11Z,14Z,16E)-eicosapentaenoate + H2O = 18S-resolvin E1. The catalysed reaction is Release of the N-terminal residue from a tripeptide.. It functions in the pathway lipid metabolism; leukotriene B4 biosynthesis. With respect to regulation, inhibited by bestatin. The epoxide hydrolase activity is restrained by suicide inactivation that involves binding of LTA4 to Tyr-379. 4-(4-benzylphenyl)thiazol-2-amine (ARM1) selectively inhibits the epoxide hydrolase activity. Its function is as follows. Bifunctional zinc metalloenzyme that comprises both epoxide hydrolase (EH) and aminopeptidase activities. Acts as an epoxide hydrolase to catalyze the conversion of LTA4 to the pro-inflammatory mediator leukotriene B4 (LTB4). Also has aminopeptidase activity, with high affinity for N-terminal arginines of various synthetic tripeptides. In addition to its pro-inflammatory EH activity, may also counteract inflammation by its aminopeptidase activity, which inactivates by cleavage another neutrophil attractant, the tripeptide Pro-Gly-Pro (PGP), a bioactive fragment of collagen generated by the action of matrix metalloproteinase-9 (MMP9) and prolylendopeptidase (PREPL). Involved also in the biosynthesis of resolvin E1 and 18S-resolvin E1 from eicosapentaenoic acid, two lipid mediators that show potent anti-inflammatory and pro-resolving actions. The sequence is that of Leukotriene A-4 hydrolase (LTA4H) from Homo sapiens (Human).